Consider the following 324-residue polypeptide: Galactosylgalactosylxylosylprotein 3-beta-glucuronosyltransferase 2 (324 aa).

The Cytoplasmic segment spans residues 1-2 (MK). Residues 3–23 (SALCNRFFILLPWILIVIIML) form a helical; Signal-anchor for type II membrane protein membrane-spanning segment. The Lumenal segment spans residues 24–324 (DVDPRRPAPQ…YHMDTVNIEV (301 aa)). The disordered stretch occupies residues 34-78 (LTSRPYFSPHTVGCGGSRVPLRRSSPGRDAAEKRNESRPQLQPEP). Residue asparagine 68 is glycosylated (N-linked (GlcNAc...) asparagine). A Mn(2+)-binding site is contributed by aspartate 188. The active-site Proton acceptor is glutamate 274. Asparagine 293 is a glycosylation site (N-linked (GlcNAc...) asparagine).

It belongs to the glycosyltransferase 43 family. Homodimer. Mn(2+) is required as a cofactor. As to expression, expressed in the cerebral cortex, cerebellum and whole brain.

The protein resides in the golgi apparatus membrane. It catalyses the reaction 3-O-(beta-D-galactosyl-(1-&gt;3)-beta-D-galactosyl-(1-&gt;4)-beta-D-xylosyl)-L-seryl-[protein] + UDP-alpha-D-glucuronate = 3-O-(beta-D-GlcA-(1-&gt;3)-beta-D-Gal-(1-&gt;3)-beta-D-Gal-(1-&gt;4)-beta-D-Xyl)-L-seryl-[protein] + UDP + H(+). The protein operates within protein modification; protein glycosylation. In terms of biological role, involved in the biosynthesis of L2/HNK-1 carbohydrate epitope on both glycolipids and glycoproteins. Substrates include asialo-orosomucoid (ASOR), paragloboside (lacto-N-neotetraosylceramide), Gal-beta-1,4-GlcNAc-beta-1,3-Gal-beta-1,4-Glc-pyridylamine and Gal-beta-1,3-GlcNAc-beta-1,3-Gal-beta-1,4-Glc-pyridylamine. The protein is Galactosylgalactosylxylosylprotein 3-beta-glucuronosyltransferase 2 (B3gat2) of Rattus norvegicus (Rat).